The primary structure comprises 571 residues: DM7 family protein CG15332 (571 aa).

The tract at residues 440 to 472 (TRDDGINTADYQSQFPELEPEPEPEPEDEGEDV) is disordered. The span at 457–471 (LEPEPEPEPEDEGED) shows a compositional bias: acidic residues.

This sequence belongs to the DM7 family.

The sequence is that of DM7 family protein CG15332 from Drosophila melanogaster (Fruit fly).